The following is an 82-amino-acid chain: Defensin-like protein 7 (82 aa).

An N-terminal signal peptide occupies residues 1-29 (MKSSTTSMQLIPTLFFLTILLASPEMVEG). A Pyrrolidone carboxylic acid modification is found at Gln30. Disulfide bonds link Cys33–Cys77, Cys44–Cys64, Cys50–Cys71, and Cys54–Cys73.

It belongs to the DEFL family. Expressed in stems, roots, rosette leaves and flower buds.

The protein resides in the secreted. In Arabidopsis thaliana (Mouse-ear cress), this protein is Defensin-like protein 7 (LCR75).